A 283-amino-acid polypeptide reads, in one-letter code: MITLKTVRELRAAIARARGDGKRIALVPTMGNLHAGHIALVEKARQRADFVVASIFVNPLQFGPAEDLDKYPRTLAADQEKLLEGGCNLLFAPNAEEMYPGGMQGQTRISVPVVSEGLCGAARPGHFEGVATVVTKLFNIAQPDIALFGEKDYQQLAVIRTLVRDLNMPIQIFGEPTVRAADGLALSSRNGYLNDEQRNVAPALYRILSDIGTAIQAGEQDFAGLCARGLEALRQAGFRPDYLEIREAASLRPAAPGDLRLVVLAAAYLGNTRLIDNLSVDIA.

30-37 (MGNLHAGH) contributes to the ATP binding site. The Proton donor role is filled by H37. Position 61 (Q61) interacts with (R)-pantoate. Residue Q61 participates in beta-alanine binding. 149-152 (GEKD) contributes to the ATP binding site. Q155 contacts (R)-pantoate. ATP contacts are provided by residues V178 and 186–189 (LSSR).

It belongs to the pantothenate synthetase family. As to quaternary structure, homodimer.

Its subcellular location is the cytoplasm. It carries out the reaction (R)-pantoate + beta-alanine + ATP = (R)-pantothenate + AMP + diphosphate + H(+). It participates in cofactor biosynthesis; (R)-pantothenate biosynthesis; (R)-pantothenate from (R)-pantoate and beta-alanine: step 1/1. In terms of biological role, catalyzes the condensation of pantoate with beta-alanine in an ATP-dependent reaction via a pantoyl-adenylate intermediate. This Azotobacter vinelandii (strain DJ / ATCC BAA-1303) protein is Pantothenate synthetase.